Here is a 55-residue protein sequence, read N- to C-terminus: uncharacterized protein (55 aa).

The segment at 1–22 is disordered; that stretch reads MPALKSHVRPNSAAPARRQPWP.

This is an uncharacterized protein from Rhodobacter capsulatus (Rhodopseudomonas capsulata).